We begin with the raw amino-acid sequence, 429 residues long: Saccharopine dehydrogenase-like oxidoreductase (429 aa).

Alanine 2 is modified (N-acetylalanine). A phosphoserine mark is found at serine 209, serine 215, and serine 217.

Belongs to the saccharopine dehydrogenase family.

This Mus musculus (Mouse) protein is Saccharopine dehydrogenase-like oxidoreductase (Sccpdh).